A 142-amino-acid chain; its full sequence is Hemoglobin subunit alpha (142 aa).

The Globin domain occupies 2–142; it reads VLSSADKNNV…VSTVLTSKYR (141 aa). Serine 4 is modified (phosphoserine). Lysine 8 and lysine 12 each carry N6-succinyllysine. Residue lysine 17 is modified to N6-acetyllysine; alternate. Residue lysine 17 is modified to N6-succinyllysine; alternate. Tyrosine 25 is subject to Phosphotyrosine. A Phosphoserine modification is found at serine 36. N6-succinyllysine is present on lysine 41. The residue at position 50 (serine 50) is a Phosphoserine. Residue histidine 59 coordinates O2. Histidine 88 is a binding site for heme b. Serine 103 carries the phosphoserine modification. Threonine 109 carries the post-translational modification Phosphothreonine. Position 125 is a phosphoserine (serine 125). Phosphothreonine occurs at positions 135 and 138. Serine 139 is subject to Phosphoserine.

It belongs to the globin family. Heterotetramer of two alpha chains and two beta chains. As to expression, red blood cells.

Its function is as follows. Involved in oxygen transport from the lung to the various peripheral tissues. Hemopressin acts as an antagonist peptide of the cannabinoid receptor CNR1. Hemopressin-binding efficiently blocks cannabinoid receptor CNR1 and subsequent signaling. This Panthera leo (Lion) protein is Hemoglobin subunit alpha (HBA).